Reading from the N-terminus, the 1648-residue chain is Vitellogenin-6 (1648 aa).

The N-terminal stretch at 1-15 (MRFAVLLALFGLALA) is a signal peptide. Residues 26–691 (YRSGREYRYQ…SNDSVLPKEI (666 aa)) enclose the Vitellogenin domain. 2 cysteine pairs are disulfide-bonded: Cys-178-Cys-203 and Cys-219-Cys-222. Asn-237, Asn-371, and Asn-683 each carry an N-linked (GlcNAc...) asparagine glycan. The interval 1070–1092 (EKNVEYEQEDKEPKSSQLQSQIR) is disordered. N-linked (GlcNAc...) asparagine glycosylation is present at Asn-1295. The region spanning 1346 to 1514 (PECIVKSKEI…SYLSKDDECE (169 aa)) is the VWFD domain. Intrachain disulfides connect Cys-1348/Cys-1477 and Cys-1370/Cys-1513. 2 N-linked (GlcNAc...) asparagine glycosylation sites follow: Asn-1584 and Asn-1617.

Post-translationally, the precursor protein is probably further processed into vitellin polypeptides VT2 and VT3. Both VT2 and VT3 polypeptides seem to be N-glycosylated.

Its subcellular location is the secreted. Precursor of the egg-yolk proteins that are sources of nutrients during embryonic development. The protein is Vitellogenin-6 (vit-6) of Oscheius tipulae.